Reading from the N-terminus, the 86-residue chain is BolA-like protein 2 (86 aa).

At methionine 1 the chain carries N-acetylmethionine.

This sequence belongs to the BolA/IbaG family. As to quaternary structure, interacts with GLRX3; forms a heterotrimeric complex composed by two BOLA2 molecules and one GLRX3 molecule; linked by [2Fe-2S] clusters.

It localises to the cytoplasm. The protein resides in the nucleus. Acts as a cytosolic iron-sulfur (Fe-S) cluster assembly factor that facilitates [2Fe-2S] cluster insertion into a subset of cytosolic proteins. Acts together with the monothiol glutaredoxin GLRX3. In Homo sapiens (Human), this protein is BolA-like protein 2 (BOLA2).